The primary structure comprises 212 residues: uncharacterized protein (212 aa).

Residues 87-105 show a composition bias toward low complexity; the sequence is NNNNNNNNNNNHNHNNSNN. The disordered stretch occupies residues 87-107; it reads NNNNNNNNNNNHNHNNSNNTA.

This is an uncharacterized protein from Saccharomyces cerevisiae (strain ATCC 204508 / S288c) (Baker's yeast).